Reading from the N-terminus, the 203-residue chain is Holliday junction branch migration complex subunit RuvA (203 aa).

Residues 1 to 63 form a domain I region; sequence MIGKLSGKID…EEHIHLYGFL (63 aa). The domain II stretch occupies residues 64–142; it reads TIEEKNFFNL…KISTGAAIIN (79 aa). The interval 143-149 is flexible linker; sequence DSLNIKN. Positions 150–203 are domain III; that stretch reads ITSVASNEVIKALVNLGFSRFEAQNSVQGIVIQNPEISIDELIKTALKNRNAGL.

Belongs to the RuvA family. Homotetramer. Forms an RuvA(8)-RuvB(12)-Holliday junction (HJ) complex. HJ DNA is sandwiched between 2 RuvA tetramers; dsDNA enters through RuvA and exits via RuvB. An RuvB hexamer assembles on each DNA strand where it exits the tetramer. Each RuvB hexamer is contacted by two RuvA subunits (via domain III) on 2 adjacent RuvB subunits; this complex drives branch migration. In the full resolvosome a probable DNA-RuvA(4)-RuvB(12)-RuvC(2) complex forms which resolves the HJ.

It is found in the cytoplasm. Functionally, the RuvA-RuvB-RuvC complex processes Holliday junction (HJ) DNA during genetic recombination and DNA repair, while the RuvA-RuvB complex plays an important role in the rescue of blocked DNA replication forks via replication fork reversal (RFR). RuvA specifically binds to HJ cruciform DNA, conferring on it an open structure. The RuvB hexamer acts as an ATP-dependent pump, pulling dsDNA into and through the RuvAB complex. HJ branch migration allows RuvC to scan DNA until it finds its consensus sequence, where it cleaves and resolves the cruciform DNA. This is Holliday junction branch migration complex subunit RuvA from Rickettsia akari (strain Hartford).